Here is a 587-residue protein sequence, read N- to C-terminus: Putative gustatory receptor 59b (587 aa).

The Cytoplasmic segment spans residues 1–4 (MPSY). A helical transmembrane segment spans residues 5 to 25 (MAFTPYIMFSTNYAAIAYILI). The Extracellular portion of the chain corresponds to 26-62 (SRCYRDSMLLDLQRITLEVNREMLRTGKKMNSLIRRM). A helical membrane pass occupies residues 63–83 (FFLKTFTLTYSCLSYILAVLV). At 84 to 97 (YQWRAQNWSNLFNG) the chain is on the cytoplasmic side. Residues 98 to 118 (LLVNISLTILVVTTFFYFVSL) form a helical membrane-spanning segment. Residues 119 to 277 (MHVARGFDFV…CGLYPVNKAK (159 aa)) lie on the Extracellular side of the membrane. The N-linked (GlcNAc...) asparagine glycan is linked to N159. A helical membrane pass occupies residues 278 to 298 (WLEMVASIVVHSIMLFQFHLV). Topologically, residues 299-309 (MRGGYTTLFSR) are cytoplasmic. The chain crosses the membrane as a helical span at residues 310–330 (TYALLANIITLTMLPIVMWQV). The Extracellular portion of the chain corresponds to 331 to 403 (RSVFLAKRHY…GIDGVRRSLR (73 aa)). Residues 404-424 (ILLFVKFFTLSWLCITDIIFL) traverse the membrane as a helical segment. The Cytoplasmic segment spans residues 425 to 518 (FYSSDAVIWV…IYAPQMLATR (94 aa)). Residues 519 to 539 (FDHFVIGVIQAYWGAVFTFDL) form a helical membrane-spanning segment. The Extracellular segment spans residues 540-587 (STSFLWVVYGSVQYHVRSLDYYLIDYMCDVAVEYHDSARHSWSEKECY).

Belongs to the insect chemoreceptor superfamily. Gustatory receptor (GR) family. Gr22e subfamily.

It is found in the cell membrane. Functionally, probable gustatory receptor which mediates acceptance or avoidance behavior, depending on its substrates. In Drosophila erecta (Fruit fly), this protein is Putative gustatory receptor 59b.